Here is a 240-residue protein sequence, read N- to C-terminus: Probable septum site-determining protein MinC (240 aa).

The protein belongs to the MinC family. Interacts with MinD and FtsZ.

In terms of biological role, cell division inhibitor that blocks the formation of polar Z ring septums. Rapidly oscillates between the poles of the cell to destabilize FtsZ filaments that have formed before they mature into polar Z rings. Prevents FtsZ polymerization. The protein is Probable septum site-determining protein MinC of Acinetobacter baylyi (strain ATCC 33305 / BD413 / ADP1).